Reading from the N-terminus, the 536-residue chain is Adenine deaminase (536 aa).

Residues 1–24 (MTPSPHDLLHCGMNSQDRDETNGD) are disordered.

It belongs to the metallo-dependent hydrolases superfamily. Adenine deaminase family. It depends on Mn(2+) as a cofactor.

It carries out the reaction adenine + H2O + H(+) = hypoxanthine + NH4(+). This is Adenine deaminase from Deinococcus radiodurans (strain ATCC 13939 / DSM 20539 / JCM 16871 / CCUG 27074 / LMG 4051 / NBRC 15346 / NCIMB 9279 / VKM B-1422 / R1).